Reading from the N-terminus, the 199-residue chain is Holliday junction branch migration complex subunit RuvA (199 aa).

Residues 1-64 (MIARLTGMLA…EDAISLFGFR (64 aa)) are domain I. The segment at 65-143 (TVAEKEFFQV…KMDVAPSTKE (79 aa)) is domain II. A flexible linker region spans residues 144-154 (AAPSEAPPEVA). Residues 154-199 (ADDVASALVNLGYKEAVVRKVLAEMAIESGASTEAVLRQALKILMK) form a domain III region.

Belongs to the RuvA family. In terms of assembly, homotetramer. Forms an RuvA(8)-RuvB(12)-Holliday junction (HJ) complex. HJ DNA is sandwiched between 2 RuvA tetramers; dsDNA enters through RuvA and exits via RuvB. An RuvB hexamer assembles on each DNA strand where it exits the tetramer. Each RuvB hexamer is contacted by two RuvA subunits (via domain III) on 2 adjacent RuvB subunits; this complex drives branch migration. In the full resolvosome a probable DNA-RuvA(4)-RuvB(12)-RuvC(2) complex forms which resolves the HJ.

The protein resides in the cytoplasm. The RuvA-RuvB-RuvC complex processes Holliday junction (HJ) DNA during genetic recombination and DNA repair, while the RuvA-RuvB complex plays an important role in the rescue of blocked DNA replication forks via replication fork reversal (RFR). RuvA specifically binds to HJ cruciform DNA, conferring on it an open structure. The RuvB hexamer acts as an ATP-dependent pump, pulling dsDNA into and through the RuvAB complex. HJ branch migration allows RuvC to scan DNA until it finds its consensus sequence, where it cleaves and resolves the cruciform DNA. This chain is Holliday junction branch migration complex subunit RuvA, found in Geobacter metallireducens (strain ATCC 53774 / DSM 7210 / GS-15).